Reading from the N-terminus, the 361-residue chain is Chorismate synthase (361 aa).

An NADP(+)-binding site is contributed by Arg48. Residues Arg126–Ser128, Gly286, Lys301–Ser305, and Arg328 each bind FMN.

This sequence belongs to the chorismate synthase family. FMNH2 is required as a cofactor.

The catalysed reaction is 5-O-(1-carboxyvinyl)-3-phosphoshikimate = chorismate + phosphate. Its pathway is metabolic intermediate biosynthesis; chorismate biosynthesis; chorismate from D-erythrose 4-phosphate and phosphoenolpyruvate: step 7/7. Its function is as follows. Catalyzes the anti-1,4-elimination of the C-3 phosphate and the C-6 proR hydrogen from 5-enolpyruvylshikimate-3-phosphate (EPSP) to yield chorismate, which is the branch point compound that serves as the starting substrate for the three terminal pathways of aromatic amino acid biosynthesis. This reaction introduces a second double bond into the aromatic ring system. The protein is Chorismate synthase of Korarchaeum cryptofilum (strain OPF8).